Here is a 118-residue protein sequence, read N- to C-terminus: Large ribosomal subunit protein bL20 (118 aa).

This sequence belongs to the bacterial ribosomal protein bL20 family.

Binds directly to 23S ribosomal RNA and is necessary for the in vitro assembly process of the 50S ribosomal subunit. It is not involved in the protein synthesizing functions of that subunit. The protein is Large ribosomal subunit protein bL20 of Staphylococcus haemolyticus (strain JCSC1435).